The sequence spans 434 residues: uncharacterized protein (434 aa).

In terms of domain architecture, TRAM spans 4-62; that stretch reads LLTIHTQVEGEITALAFGGAGILRYHGFVIFVPFTAPGDQIICRIIEIKKSFAVAELVK. [4Fe-4S] cluster-binding residues include Cys-75, Cys-81, Cys-84, and Cys-161. Residues Gln-266, Tyr-295, Glu-316, and Asn-364 each contribute to the S-adenosyl-L-methionine site. Cys-391 (nucleophile) is an active-site residue.

It belongs to the class I-like SAM-binding methyltransferase superfamily. RNA M5U methyltransferase family.

This is an uncharacterized protein from Protochlamydia amoebophila (strain UWE25).